Reading from the N-terminus, the 355-residue chain is MKKIIILLTTFFLLSGCTIPRAVFKSSLINQDDPRYNLVEVTPTLKLSAPDTVPKTIVDPVFAANNWHWTSLAKGDVLHITILSSGGAGYLSNNASGDRADFENILVTDSNTVQVPYAGTIPVSGLDVTQLADEIKKRLSRVVLNPQVIVTLTARTGAMVTVEGSGKTGRYPLEQSMNRLSHLLATAVAVENTSTDMMEVHVTRQQHYFTARLSDIYQYPGLDIALQPDDRITLRQVTEYVNVLGAAGVQGKHALVQRHSSVVDALALAKGLNDNLADPQAIFLYKHNEAEQAKQQMRKLNIYHVDMSQPNSVFLAQAIRVDNGDVIYISNASLTDFAKVKAAFDSFLTRGTNSF.

The signal sequence occupies residues 1-16; it reads MKKIIILLTTFFLLSG. Cys17 is lipidated: N-palmitoyl cysteine. Cys17 carries S-diacylglycerol cysteine lipidation.

Belongs to the BexD/CtrA/VexA family.

Its subcellular location is the cell outer membrane. Its function is as follows. May form an ATP-driven capsule polysaccharide export apparatus, in association with the VexB, VexC and VexD proteins. May function as a membrane anchor for the polysaccharide. Possible porin properties. This Salmonella typhi protein is Vi polysaccharide export protein VexA/TviF (vexA).